Consider the following 681-residue polypeptide: 2-(S-pantetheinyl)-carbapenam-3-carboxylate methyltransferase (681 aa).

Residues 1-144 form the B12-binding domain; the sequence is MTVPAARSGR…IERLADHPDY (144 aa). Asn-18, Ser-72, Tyr-74, Val-75, His-103, Gly-126, and Glu-127 together coordinate cob(II)alamin. A Radical SAM core domain is found at 192-417; sequence RDLRFYALWE…RLYVEEPGTP (226 aa). The [4Fe-4S] cluster site is built by Cys-206 and Cys-210. Residue Phe-212 coordinates 5'-deoxyadenosine. Cys-213 is a binding site for [4Fe-4S] cluster. Cob(II)alamin is bound by residues Asp-214 and Cys-249. 5'-deoxyadenosine is bound by residues Gln-312, Glu-349, and Gly-384.

It belongs to the methyltransferase superfamily. [4Fe-4S] cluster serves as cofactor. The cofactor is cob(II)alamin.

It carries out the reaction (2R,3R,5S)-2-(S-pantetheinyl)-carbapenam-3-carboxylate + AH2 + 2 S-adenosyl-L-methionine = (2R,3R,5S,6R)-6-(methyl)-2-(S-pantetheinyl)-carbapenam-3-carboxylate + 5'-deoxyadenosine + L-methionine + A + S-adenosyl-L-homocysteine + 2 H(+). The catalysed reaction is (2R,3R,5S,6R)-6-(methyl)-2-(S-pantetheinyl)-carbapenam-3-carboxylate + AH2 + 2 S-adenosyl-L-methionine = (2R,3R,5S,6R)-6-(ethyl)-2-(S-pantetheinyl)-carbapenam-3-carboxylate + 5'-deoxyadenosine + L-methionine + A + S-adenosyl-L-homocysteine + 2 H(+). It functions in the pathway antibiotic biosynthesis. Its function is as follows. Methyltransferase involved in the biosynthesis of the beta-lactam carbapenem antibiotic thienamycin. Catalyzes two consecutive S-adenosyl-L-methionine-dependent methylations to build out the C6-ethyl side chain in a stereocontrolled manner. In vitro can use methyl viologen and NADPH as the iron-sulfur cluster reductants. In Streptantibioticus cattleyicolor (strain ATCC 35852 / DSM 46488 / JCM 4925 / NBRC 14057 / NRRL 8057) (Streptomyces cattleya), this protein is 2-(S-pantetheinyl)-carbapenam-3-carboxylate methyltransferase.